We begin with the raw amino-acid sequence, 305 residues long: tRNA dimethylallyltransferase 1 (305 aa).

10-17 (GPTASGKT) lines the ATP pocket. Residue 12–17 (TASGKT) coordinates substrate. The tract at residues 35 to 38 (DSRQ) is interaction with substrate tRNA.

Belongs to the IPP transferase family. Monomer. Requires Mg(2+) as cofactor.

The enzyme catalyses adenosine(37) in tRNA + dimethylallyl diphosphate = N(6)-dimethylallyladenosine(37) in tRNA + diphosphate. In terms of biological role, catalyzes the transfer of a dimethylallyl group onto the adenine at position 37 in tRNAs that read codons beginning with uridine, leading to the formation of N6-(dimethylallyl)adenosine (i(6)A). The chain is tRNA dimethylallyltransferase 1 from Syntrophus aciditrophicus (strain SB).